Reading from the N-terminus, the 237-residue chain is Riboflavin kinase (237 aa).

The tract at residues 1-101 (MRLKIKAIWV…SRIFSSEPDV (101 aa)) is unknown. The riboflavin kinase stretch occupies residues 102-237 (LELEGNVLKG…VKKQGMEGQK (136 aa)). 111-116 (GLGEGQ) is a CDP binding site. T140 and N142 together coordinate Mg(2+). FMN-binding residues include T197 and E205. 210-213 (VKLR) lines the CDP pocket.

It belongs to the archaeal riboflavin kinase family. It depends on Mg(2+) as a cofactor.

The catalysed reaction is riboflavin + CTP = CDP + FMN + H(+). It functions in the pathway cofactor biosynthesis; FMN biosynthesis; FMN from riboflavin (CTP route): step 1/1. Catalyzes the CTP-dependent phosphorylation of riboflavin (vitamin B2) to form flavin mononucleotide (FMN). The sequence is that of Riboflavin kinase (ribK) from Methanosarcina acetivorans (strain ATCC 35395 / DSM 2834 / JCM 12185 / C2A).